A 72-amino-acid chain; its full sequence is SRY-related protein AES1 (72 aa).

The segment at residues 1 to 69 (VKRPMNAFMV…KHMADYPDYK (69 aa)) is a DNA-binding region (HMG box).

Its subcellular location is the nucleus. This Alligator mississippiensis (American alligator) protein is SRY-related protein AES1.